We begin with the raw amino-acid sequence, 247 residues long: 2,3-bisphosphoglycerate-dependent phosphoglycerate mutase (247 aa).

Substrate contacts are provided by residues 8 to 15 (RHGESQWN), 21 to 22 (TG), arginine 60, 87 to 90 (ERHY), lysine 98, 114 to 115 (RR), and 183 to 184 (GN). The active-site Tele-phosphohistidine intermediate is the histidine 9. Glutamate 87 (proton donor/acceptor) is an active-site residue.

It belongs to the phosphoglycerate mutase family. BPG-dependent PGAM subfamily.

It catalyses the reaction (2R)-2-phosphoglycerate = (2R)-3-phosphoglycerate. The protein operates within carbohydrate degradation; glycolysis; pyruvate from D-glyceraldehyde 3-phosphate: step 3/5. Functionally, catalyzes the interconversion of 2-phosphoglycerate and 3-phosphoglycerate. In Chlorobium phaeovibrioides (strain DSM 265 / 1930) (Prosthecochloris vibrioformis (strain DSM 265)), this protein is 2,3-bisphosphoglycerate-dependent phosphoglycerate mutase.